The chain runs to 979 residues: MHC class II regulatory factor RFX1 (979 aa).

Disordered stretches follow at residues 1–136 (MATQ…QVVQ), 181–227 (QSAA…PTGT), and 370–405 (TSTG…STGG). Residues 12-44 (APPPSQPPQAPPQAQPQPPPPPPPAAPQPPQPP) show a composition bias toward pro residues. Positions 45-73 (TAAATPQPQYVTELQSPQPQAQPPGGQKQ) are enriched in low complexity. S60 carries the phosphoserine modification. Residues 81–96 (VPAPSQPTGAPTPSPA) are compositionally biased toward pro residues. A compositionally biased stretch (polar residues) spans 114-126 (ETVSEASPGSTAS). The span at 127 to 136 (QTGVPTQVVQ) shows a compositional bias: low complexity. Composition is skewed to polar residues over residues 190–203 (GQVS…QQVH) and 209–220 (SPVQANSSSSKT). Over residues 370–379 (TSTGAGASNS) the composition is skewed to low complexity. Residues 380–405 (SGGGGSGGGGGGGGGGGGGGSGSTGG) are compositionally biased toward gly residues. A DNA-binding region (RFX-type winged-helix) is located at residues 438–513 (TVQWLLDNYE…YHYYGLRIKA (76 aa)). The tract at residues 744 to 979 (FAQTLRRYTS…GLFVQALPSS (236 aa)) is necessary for dimerization. Residues 915–960 (SLNPLDPDKDEEEEEEEESEDELPQDISLAAGGESPALGPETLEPP) form a disordered region. Acidic residues predominate over residues 922 to 938 (DKDEEEEEEEESEDELP). Phosphoserine occurs at positions 978 and 979.

It belongs to the RFX family. Homodimer; binds DNA as a homodimer. Heterodimer; heterodimerizes with RFX2 and RFX3.

Its subcellular location is the nucleus. In terms of biological role, regulatory factor essential for MHC class II genes expression. Binds to the X boxes of MHC class II genes. Also binds to an inverted repeat (ENH1) required for hepatitis B virus genes expression and to the most upstream element (alpha) of the RPL30 promoter. The protein is MHC class II regulatory factor RFX1 (RFX1) of Homo sapiens (Human).